We begin with the raw amino-acid sequence, 200 residues long: Protein GrpE (200 aa).

Basic and acidic residues predominate over residues 1–10 (MQEKDSKDVT). The segment at 1–57 (MQEKDSKDVTMEDEETIASQEEIEVEGNSEESSKEEESNNSEISDENLSEENLKLKD) is disordered. Positions 11–29 (MEDEETIASQEEIEVEGNS) are enriched in acidic residues.

This sequence belongs to the GrpE family. As to quaternary structure, homodimer.

It localises to the cytoplasm. Functionally, participates actively in the response to hyperosmotic and heat shock by preventing the aggregation of stress-denatured proteins, in association with DnaK and GrpE. It is the nucleotide exchange factor for DnaK and may function as a thermosensor. Unfolded proteins bind initially to DnaJ; upon interaction with the DnaJ-bound protein, DnaK hydrolyzes its bound ATP, resulting in the formation of a stable complex. GrpE releases ADP from DnaK; ATP binding to DnaK triggers the release of the substrate protein, thus completing the reaction cycle. Several rounds of ATP-dependent interactions between DnaJ, DnaK and GrpE are required for fully efficient folding. The sequence is that of Protein GrpE from Clostridium acetobutylicum (strain ATCC 824 / DSM 792 / JCM 1419 / IAM 19013 / LMG 5710 / NBRC 13948 / NRRL B-527 / VKM B-1787 / 2291 / W).